The primary structure comprises 442 residues: Transducin beta-like protein 2 (442 aa).

The tract at residues 36–71 (EKPSQPVCQKENEPKKSGSKKQKQNQRVRKEKPQQH) is disordered. Residues 52–65 (SGSKKQKQNQRVRK) are compositionally biased toward basic residues. 7 WD repeats span residues 84 to 123 (SHSG…QREH), 130 to 170 (VELD…DGGF), 182 to 222 (KHKA…STIN), 224 to 263 (NQMN…GEFQ), 273 to 312 (GHSA…KKQQ), 323 to 362 (EEAS…KEEY), and 366 to 404 (VHGE…RAVV). Residue lysine 164 forms a Glycyl lysine isopeptide (Lys-Gly) (interchain with G-Cter in SUMO2) linkage. Position 428 is a phosphothreonine (threonine 428).

This Mus musculus (Mouse) protein is Transducin beta-like protein 2 (Tbl2).